A 210-amino-acid polypeptide reads, in one-letter code: Chorismate pyruvate-lyase (210 aa).

Belongs to the chorismate pyruvate-lyase type 2 family.

The catalysed reaction is chorismate = 4-hydroxybenzoate + pyruvate. Functionally, removes the pyruvyl group from chorismate to provide 4-hydroxybenzoate (4HB). Involved in the synthesis of glycosylated p-hydroxybenzoic acid methyl esters (p-HBADs) and phenolic glycolipids (PGL) that play important roles in the pathogenesis of mycobacterial infections. The protein is Chorismate pyruvate-lyase of Mycobacterium leprae (strain TN).